The sequence spans 992 residues: RNA-binding protein 12 (992 aa).

In terms of domain architecture, RRM 1 spans 304–379; that stretch reads LYVSVHGMPF…RYVEVSPATE (76 aa). 2 positions are modified to phosphoserine: Ser-352 and Ser-375. A disordered region spans residues 393–424; the sequence is QSMGPSGQAHPPPQTLPRSKSPSGQKRSRSRS. The segment covering 408–417 has biased composition (polar residues); it reads LPRSKSPSGQ. A phosphoserine mark is found at Ser-420, Ser-422, and Ser-424. Residues 430–507 form the RRM 2 domain; it reads FCVYLKGLPF…RFIQVHPITK (78 aa). Ser-525 carries the post-translational modification Phosphoserine. Residues 849-913 are disordered; that stretch reads FGGIPQNFGN…PGFGASSGKP (65 aa). Positions 876–887 are enriched in low complexity; the sequence is LGSVPGHLSGPP. The RRM 3 domain occupies 916–992; sequence TIIKVQNMPF…GSRKVKLVLG (77 aa).

Its subcellular location is the nucleus. The sequence is that of RNA-binding protein 12 (Rbm12) from Mus musculus (Mouse).